The chain runs to 239 residues: tRNA (guanine-N(7)-)-methyltransferase (239 aa).

Residues E69, E94, D121, and D144 each contribute to the S-adenosyl-L-methionine site. D144 is a catalytic residue. K148 contributes to the substrate binding site. An interaction with RNA region spans residues 150 to 155; sequence RHNKRR. Substrate is bound by residues D180 and 217–220; that span reads TKFE.

This sequence belongs to the class I-like SAM-binding methyltransferase superfamily. TrmB family. In terms of assembly, monomer.

The enzyme catalyses guanosine(46) in tRNA + S-adenosyl-L-methionine = N(7)-methylguanosine(46) in tRNA + S-adenosyl-L-homocysteine. It functions in the pathway tRNA modification; N(7)-methylguanine-tRNA biosynthesis. In terms of biological role, catalyzes the formation of N(7)-methylguanine at position 46 (m7G46) in tRNA. The chain is tRNA (guanine-N(7)-)-methyltransferase from Photorhabdus laumondii subsp. laumondii (strain DSM 15139 / CIP 105565 / TT01) (Photorhabdus luminescens subsp. laumondii).